We begin with the raw amino-acid sequence, 202 residues long: Translation initiation factor IF-3 (202 aa).

The protein belongs to the IF-3 family. As to quaternary structure, monomer.

Its subcellular location is the cytoplasm. Its function is as follows. IF-3 binds to the 30S ribosomal subunit and shifts the equilibrium between 70S ribosomes and their 50S and 30S subunits in favor of the free subunits, thus enhancing the availability of 30S subunits on which protein synthesis initiation begins. The sequence is that of Translation initiation factor IF-3 from Prochlorococcus marinus (strain MIT 9211).